Here is a 1043-residue protein sequence, read N- to C-terminus: Beta-klotho (1043 aa).

Over 1–994 (MKTGCAAGSP…ICSFLVEKKP (994 aa)) the chain is Extracellular. Glycosyl hydrolase-1 regions lie at residues 77-506 (LYDT…DNGF) and 515-965 (MKGR…SSGL). Asn-84, Asn-122, Asn-161, Asn-211, Asn-262, Asn-308, Asn-389, Asn-552, Asn-609, Asn-700, Asn-704, and Asn-837 each carry an N-linked (GlcNAc...) asparagine glycan. A helical membrane pass occupies residues 995 to 1015 (LIFFGCCFISTLAVLLSITVF). Topologically, residues 1016 to 1043 (HHQKRRKFQKARNLQNIPLKKGHSRVFS) are cytoplasmic.

The protein belongs to the glycosyl hydrolase 1 family. Klotho subfamily. As to quaternary structure, interacts with FGF19; this interaction is direct. Interacts (via C-terminus) with FGF21; this interaction is direct. Interacts with FGFR1 and FGFR4. In terms of tissue distribution, present in liver, muscle and white adipose tissue, but not in kidney (at protein level). Expressed in liver and pancreas, and at lower levels in skin, stomach, skeletal muscle, small intestine and lung.

The protein localises to the cell membrane. Its function is as follows. Contributes to the transcriptional repression of cholesterol 7-alpha-hydroxylase (CYP7A1), the rate-limiting enzyme in bile acid synthesis. Probably inactive as a glycosidase. Increases the ability of FGFR1 and FGFR4 to bind FGF21. In Mus musculus (Mouse), this protein is Beta-klotho (Klb).